Consider the following 569-residue polypeptide: Proline--tRNA ligase (569 aa).

Belongs to the class-II aminoacyl-tRNA synthetase family. ProS type 1 subfamily. As to quaternary structure, homodimer.

It is found in the cytoplasm. The catalysed reaction is tRNA(Pro) + L-proline + ATP = L-prolyl-tRNA(Pro) + AMP + diphosphate. Catalyzes the attachment of proline to tRNA(Pro) in a two-step reaction: proline is first activated by ATP to form Pro-AMP and then transferred to the acceptor end of tRNA(Pro). As ProRS can inadvertently accommodate and process non-cognate amino acids such as alanine and cysteine, to avoid such errors it has two additional distinct editing activities against alanine. One activity is designated as 'pretransfer' editing and involves the tRNA(Pro)-independent hydrolysis of activated Ala-AMP. The other activity is designated 'posttransfer' editing and involves deacylation of mischarged Ala-tRNA(Pro). The misacylated Cys-tRNA(Pro) is not edited by ProRS. The chain is Proline--tRNA ligase from Legionella pneumophila subsp. pneumophila (strain Philadelphia 1 / ATCC 33152 / DSM 7513).